The sequence spans 458 residues: Exodeoxyribonuclease 7 large subunit (458 aa).

Belongs to the XseA family. In terms of assembly, heterooligomer composed of large and small subunits.

Its subcellular location is the cytoplasm. It catalyses the reaction Exonucleolytic cleavage in either 5'- to 3'- or 3'- to 5'-direction to yield nucleoside 5'-phosphates.. Its function is as follows. Bidirectionally degrades single-stranded DNA into large acid-insoluble oligonucleotides, which are then degraded further into small acid-soluble oligonucleotides. This chain is Exodeoxyribonuclease 7 large subunit, found in Halalkalibacterium halodurans (strain ATCC BAA-125 / DSM 18197 / FERM 7344 / JCM 9153 / C-125) (Bacillus halodurans).